The primary structure comprises 442 residues: MTNIWHTAPVSALSGEITICGDKSMSHRALLLAALAEGQTEIRGFLPCADCLATAQALRALWVDIQREKEIVTIRGVGFLGLQPPKAPLNMQNSGTSMRLLAGILAAQRFESVLCGDESLEKRPMQRIITPLVQMGAKIVSHSNFTAPLHISGRPLTGIDYALPLPSAQLKSCLILAGLLADGTTRLHTCGISRDHTERMLPLFGGALETQKEQIIVTGGQKLHGCVLEIVGDLSAAAFFMVAALIAPRAEVVIRNVGINPTRSAIITLLQKMGGRIELHHQRFWGAEPVADIVVYHSKLRGITVAPEWIANAIDELPIFFIAAACAEGTTFVGNLSELRVKESDRLAAMAQNLQTLGVACDVGADFIHIYGRSDRQFLPARVNSFGDHRIAMSLAVAGVRAAGELLIDDGAVAAVSMPQFRDFAAAIGMNVGEKDAKNCHD.

Positions 23, 24, and 28 each coordinate 3-phosphoshikimate. Lys23 is a phosphoenolpyruvate binding site. Residues Gly95 and Arg123 each coordinate phosphoenolpyruvate. Residues Ser167, Gln169, Asp315, and Lys342 each contribute to the 3-phosphoshikimate site. Gln169 contacts phosphoenolpyruvate. Catalysis depends on Asp315, which acts as the Proton acceptor. Positions 346 and 390 each coordinate phosphoenolpyruvate.

It belongs to the EPSP synthase family. Monomer.

Its subcellular location is the cytoplasm. The catalysed reaction is 3-phosphoshikimate + phosphoenolpyruvate = 5-O-(1-carboxyvinyl)-3-phosphoshikimate + phosphate. Its pathway is metabolic intermediate biosynthesis; chorismate biosynthesis; chorismate from D-erythrose 4-phosphate and phosphoenolpyruvate: step 6/7. In terms of biological role, catalyzes the transfer of the enolpyruvyl moiety of phosphoenolpyruvate (PEP) to the 5-hydroxyl of shikimate-3-phosphate (S3P) to produce enolpyruvyl shikimate-3-phosphate and inorganic phosphate. The polypeptide is 3-phosphoshikimate 1-carboxyvinyltransferase (Dichelobacter nodosus (strain VCS1703A)).